Consider the following 169-residue polypeptide: Crossover junction endodeoxyribonuclease RuvC (169 aa).

Active-site residues include Asp11, Glu71, and Asp143. Asp11, Glu71, and Asp143 together coordinate Mg(2+).

It belongs to the RuvC family. In terms of assembly, homodimer which binds Holliday junction (HJ) DNA. The HJ becomes 2-fold symmetrical on binding to RuvC with unstacked arms; it has a different conformation from HJ DNA in complex with RuvA. In the full resolvosome a probable DNA-RuvA(4)-RuvB(12)-RuvC(2) complex forms which resolves the HJ. Requires Mg(2+) as cofactor.

Its subcellular location is the cytoplasm. The enzyme catalyses Endonucleolytic cleavage at a junction such as a reciprocal single-stranded crossover between two homologous DNA duplexes (Holliday junction).. Functionally, the RuvA-RuvB-RuvC complex processes Holliday junction (HJ) DNA during genetic recombination and DNA repair. Endonuclease that resolves HJ intermediates. Cleaves cruciform DNA by making single-stranded nicks across the HJ at symmetrical positions within the homologous arms, yielding a 5'-phosphate and a 3'-hydroxyl group; requires a central core of homology in the junction. The consensus cleavage sequence is 5'-(A/T)TT(C/G)-3'. Cleavage occurs on the 3'-side of the TT dinucleotide at the point of strand exchange. HJ branch migration catalyzed by RuvA-RuvB allows RuvC to scan DNA until it finds its consensus sequence, where it cleaves and resolves the cruciform DNA. The chain is Crossover junction endodeoxyribonuclease RuvC from Bartonella quintana (strain Toulouse) (Rochalimaea quintana).